A 296-amino-acid chain; its full sequence is Polyamine aminopropyltransferase (296 aa).

Residues 16-251 (HLWYFEYYTG…GMWSYTFASK (236 aa)) form the PABS domain. Glutamine 46 lines the S-methyl-5'-thioadenosine pocket. Residues histidine 77 and aspartate 101 each contribute to the spermidine site. Residues glutamate 121 and 152–153 (NG) contribute to the S-methyl-5'-thioadenosine site. The active-site Proton acceptor is aspartate 170. 170–173 (DSTD) contacts spermidine.

It belongs to the spermidine/spermine synthase family. Homotetramer.

It localises to the cytoplasm. It catalyses the reaction S-adenosyl 3-(methylsulfanyl)propylamine + putrescine = S-methyl-5'-thioadenosine + spermidine + H(+). Its pathway is amine and polyamine biosynthesis; spermidine biosynthesis; spermidine from putrescine: step 1/1. With respect to regulation, strongly inhibited by S-adenosyl-1,8-diamino-3-thiooctane. Functionally, catalyzes the irreversible transfer of a propylamine group from the amino donor S-adenosylmethioninamine (decarboxy-AdoMet) to putrescine (1,4-diaminobutane) to yield spermidine. It has lower affinity and lower activity towards 1,3-diaminopropane, cadaverine (1,5-diaminopentane), agmatine, norspermidine and spermidine (in vitro). In Thermotoga maritima (strain ATCC 43589 / DSM 3109 / JCM 10099 / NBRC 100826 / MSB8), this protein is Polyamine aminopropyltransferase.